A 202-amino-acid polypeptide reads, in one-letter code: Ribosome biogenesis regulatory protein homolog (202 aa).

The segment at 82-103 is disordered; sequence TLPPPTTPLPREKPVPQPKPET.

This sequence belongs to the RRS1 family. As to quaternary structure, component of a hexameric 5S RNP precursor complex, composed of 5S RNA, RRS1, RPF2, RPL5, RPL11 and SYO1; this complex acts as a precursor for ribosome assembly.

The protein localises to the nucleus. Involved in ribosomal large subunit assembly. This is Ribosome biogenesis regulatory protein homolog from Chaetomium thermophilum (strain DSM 1495 / CBS 144.50 / IMI 039719) (Thermochaetoides thermophila).